Here is an 883-residue protein sequence, read N- to C-terminus: Chromatin structure-remodeling complex protein RSC30 (883 aa).

A DNA-binding region (zn(2)-C6 fungal-type) is located at residues 14–45 (ACTQCRKRKIGCDRAKPICGNCVKYNKPDCFY). Disordered regions lie at residues 121-157 (QNNN…DVPS) and 241-273 (NTTA…TSRT). Residues 130–149 (APRQNSSTVSSNVHGNTIVR) show a composition bias toward polar residues. S150 bears the Phosphoserine mark. Positions 241 to 251 (NTTANKINKTG) are enriched in polar residues. Basic and acidic residues predominate over residues 252 to 270 (ENSKKGKVDGKRAGFDHQT).

In terms of assembly, forms a heteromer with RSC3. Interacts with NPL6. Component of the two forms of the RSC complex composed of at least either RSC1 or RSC2, and ARP7, ARP9, LDB7, NPL6, RSC3, RSC30, RSC4, RSC58, RSC6, RSC8, RSC9, SFH1, STH1, HTL1 and probably RTT102. The complexes interact with histone and histone variant components of centromeric chromatin. Component of a fungal-specific module (HTL1-LDB7-NPL6-RSC3-RSC30) within the RSC complex.

Its subcellular location is the nucleus. In terms of biological role, component of the chromatin structure-remodeling complex (RSC), which is involved in transcription regulation and nucleosome positioning. RSC is responsible for the transfer of a histone octamer from a nucleosome core particle to naked DNA. The reaction requires ATP and involves an activated RSC-nucleosome intermediate. Remodeling reaction also involves DNA translocation, DNA twist and conformational change. As a reconfigurer of centromeric and flanking nucleosomes, RSC complex is required both for proper kinetochore function in chromosome segregation and, via a PKC1-dependent signaling pathway, for organization of the cellular cytoskeleton. This subunit is required for transcription of ribosomal protein genes and genes involved in the integrity of the cell wall. Together with HTL1, LDB7, NPL6, RSC3 components, defines a fungal-specific module within the RSC complex that plays a role in many cellular functions including the maintenance of cell wall integrity. The polypeptide is Chromatin structure-remodeling complex protein RSC30 (RSC30) (Saccharomyces cerevisiae (strain ATCC 204508 / S288c) (Baker's yeast)).